The sequence spans 228 residues: Cytidylate kinase (228 aa).

17-25 lines the ATP pocket; sequence GPTASGKGT.

The protein belongs to the cytidylate kinase family. Type 1 subfamily.

Its subcellular location is the cytoplasm. It carries out the reaction CMP + ATP = CDP + ADP. It catalyses the reaction dCMP + ATP = dCDP + ADP. In Burkholderia ambifaria (strain MC40-6), this protein is Cytidylate kinase.